Reading from the N-terminus, the 178-residue chain is ATP synthase subunit delta (178 aa).

This sequence belongs to the ATPase delta chain family. In terms of assembly, F-type ATPases have 2 components, F(1) - the catalytic core - and F(0) - the membrane proton channel. F(1) has five subunits: alpha(3), beta(3), gamma(1), delta(1), epsilon(1). F(0) has three main subunits: a(1), b(2) and c(10-14). The alpha and beta chains form an alternating ring which encloses part of the gamma chain. F(1) is attached to F(0) by a central stalk formed by the gamma and epsilon chains, while a peripheral stalk is formed by the delta and b chains.

It is found in the cell membrane. In terms of biological role, f(1)F(0) ATP synthase produces ATP from ADP in the presence of a proton or sodium gradient. F-type ATPases consist of two structural domains, F(1) containing the extramembraneous catalytic core and F(0) containing the membrane proton channel, linked together by a central stalk and a peripheral stalk. During catalysis, ATP synthesis in the catalytic domain of F(1) is coupled via a rotary mechanism of the central stalk subunits to proton translocation. Functionally, this protein is part of the stalk that links CF(0) to CF(1). It either transmits conformational changes from CF(0) to CF(1) or is implicated in proton conduction. The polypeptide is ATP synthase subunit delta (Polynucleobacter asymbioticus (strain DSM 18221 / CIP 109841 / QLW-P1DMWA-1) (Polynucleobacter necessarius subsp. asymbioticus)).